The primary structure comprises 639 residues: Exocyst complex component EXO70E2 (639 aa).

This sequence belongs to the EXO70 family. Component of the exocyst complex and of the exocyst-positive organelle (EXPO). Interacts with SEC6, SEC10A and SEC10B. Expressed in roots, in the root-hair zone, both in root hair and nonhair cells.

The protein localises to the secreted. It localises to the extracellular exosome. It is found in the cell membrane. The protein resides in the cytoplasm. Its subcellular location is the endomembrane system. Functionally, influences the subcellular localization patterns of other exocyst complex proteins (e.g. SEC5A, SEC15A, SEC15B and EXO84B) leading to their recruitment to exocyst, well-defined large punctate structures throughout the cytosol. Essential component for the formation and the recruitment of exocyst subunits to the exocyst-positive organelle (EXPO), a secreted double membrane structure also called extracellular exosome, that acts as a sequester for cytosolic proteins to release them into the apoplast. This Arabidopsis thaliana (Mouse-ear cress) protein is Exocyst complex component EXO70E2.